The following is a 37-amino-acid chain: Large ribosomal subunit protein bL36 (37 aa).

This sequence belongs to the bacterial ribosomal protein bL36 family.

This Acidovorax ebreus (strain TPSY) (Diaphorobacter sp. (strain TPSY)) protein is Large ribosomal subunit protein bL36.